Here is a 113-residue protein sequence, read N- to C-terminus: Hydrogenase maturation factor HypA (113 aa).

Residue H2 coordinates Ni(2+). 4 residues coordinate Zn(2+): C73, C76, C89, and C92.

Belongs to the HypA/HybF family.

Functionally, involved in the maturation of [NiFe] hydrogenases. Required for nickel insertion into the metal center of the hydrogenase. The sequence is that of Hydrogenase maturation factor HypA from Rhodopseudomonas palustris (strain BisA53).